A 447-amino-acid polypeptide reads, in one-letter code: MKTPKVGFVSLGCPKALVDSERILTQLKTEGYQVASDYDGADLVVVNTCGFIESAVQESLDAIGEAMSENGRVIVTGCLGKDEDKIRQMHPNVLKVTGAAAYQDVMEAVHEYVPAPPKHNPFIDLVPEQGIRLTPKHYAYLKISEGCNHRCTFCIIPSMRGDLVSRPVGSVLEEAAALKRAGVKEILVISQDTSAYGVDTKYKLDFWNGQPVKTKFFDMCEALGQLGIWVRLHYVYPYPHVDAVIDLMAQGKILPYLDIPFQHASPRVLKLMKRPAHSENTLEKIKLWREKCPDLVIRSTFVVGFPGETEEDFQILLDWLVEAQLDRVGCFTYSPVEGATANDLPDHVPEEIKQERYERFMQVQQQISAAKLQKRIGQTMTVLVDSLEDEYPVAVARSYADAPEIDGNVFVEDIDKSTIQPGDMLEVEITDADEYDLFAKLIKIKSV.

Residues 4–114 (PKVGFVSLGC…VMEAVHEYVP (111 aa)) form the MTTase N-terminal domain. 6 residues coordinate [4Fe-4S] cluster: Cys13, Cys49, Cys78, Cys147, Cys151, and Cys154. Residues 133–370 (LTPKHYAYLK…MQVQQQISAA (238 aa)) form the Radical SAM core domain. The 71-residue stretch at 373–443 (QKRIGQTMTV…EYDLFAKLIK (71 aa)) folds into the TRAM domain.

This sequence belongs to the methylthiotransferase family. RimO subfamily. [4Fe-4S] cluster is required as a cofactor.

The protein localises to the cytoplasm. It catalyses the reaction L-aspartate(89)-[ribosomal protein uS12]-hydrogen + (sulfur carrier)-SH + AH2 + 2 S-adenosyl-L-methionine = 3-methylsulfanyl-L-aspartate(89)-[ribosomal protein uS12]-hydrogen + (sulfur carrier)-H + 5'-deoxyadenosine + L-methionine + A + S-adenosyl-L-homocysteine + 2 H(+). Functionally, catalyzes the methylthiolation of an aspartic acid residue of ribosomal protein uS12. The polypeptide is Ribosomal protein uS12 methylthiotransferase RimO (Acinetobacter baumannii (strain SDF)).